Consider the following 126-residue polypeptide: MRARRGFILLLLLAVLCSTGVSLRCYNCLDPVSSCKTNSTCSPNLDACLVAVSGKQVYQQCWRFSDCNAKFILSRLEIANVQYRCCQADLCNKSFEDKPNNGAISLLGKTALLVTSVLAAILKPCF.

A signal peptide spans 1-22; the sequence is MRARRGFILLLLLAVLCSTGVS. Residues 23-110 enclose the UPAR/Ly6 domain; sequence LRCYNCLDPV…NGAISLLGKT (88 aa). 5 cysteine pairs are disulfide-bonded: Cys-25–Cys-48, Cys-28–Cys-35, Cys-41–Cys-61, Cys-67–Cys-85, and Cys-86–Cys-91. Asn-38 is a glycosylation site (N-linked (GlcNAc...) asparagine). A lipid anchor (GPI-anchor amidated asparagine) is attached at Asn-101. A propeptide spans 102–126 (removed in mature form); that stretch reads GAISLLGKTALLVTSVLAAILKPCF.

Interacts with T-cell surface antigen CD2. N- and O-glycosylated.

It localises to the cell membrane. It is found in the secreted. Its function is as follows. Potent inhibitor of the complement membrane attack complex (MAC) action, which protects self-cells from damage during complement activation. Acts by binding to the beta-haipins of C8 (C8A and C8B) components of the assembling MAC, forming an intermolecular beta-sheet that prevents incorporation of the multiple copies of C9 required for complete formation of the osmolytic pore. The sequence is that of CD59 glycoprotein from Rattus norvegicus (Rat).